Reading from the N-terminus, the 202-residue chain is AFG2-interacting ribosome maturation factor (202 aa).

Part of the 55LCC heterohexameric ATPase complex. Does not associate with pre-60S ribosomal particles.

The protein localises to the nucleus. It localises to the cytoplasm. In terms of biological role, part of the 55LCC heterohexameric ATPase complex which is chromatin-associated and promotes replisome proteostasis to maintain replication fork progression and genome stability. Required for replication fork progression, sister chromatid cohesion, and chromosome stability. The ATPase activity is specifically enhanced by replication fork DNA and is coupled to cysteine protease-dependent cleavage of replisome substrates in response to replication fork damage. Uses ATPase activity to process replisome substrates in S-phase, facilitating their proteolytic turnover from chromatin to ensure DNA replication and mitotic fidelity. Involved in the cytoplasmic maturation steps of pre-60S ribosomal particles by promoting the release of shuttling protein RSL24D1/RLP24 from the pre-ribosomal particles. Plays an essential role in early embryonic development. The polypeptide is AFG2-interacting ribosome maturation factor (airim) (Danio rerio (Zebrafish)).